The chain runs to 118 residues: Small ribosomal subunit protein mS41 (118 aa).

Residues 1–24 (MLRVVAKAQYPAAVRCFSTSHAAF) constitute a mitochondrion transit peptide.

It belongs to the mitochondrion-specific ribosomal protein mS41 family.

Its subcellular location is the mitochondrion. Its function is as follows. Involved in telomere length regulation. This Yarrowia lipolytica (strain CLIB 122 / E 150) (Yeast) protein is Small ribosomal subunit protein mS41 (FYV4).